The sequence spans 438 residues: Enolase (438 aa).

Residues H159 and E168 each coordinate substrate. Catalysis depends on E211, which acts as the Proton donor. Residues D246, E297, and D322 each coordinate Mg(2+). E297 and D322 together coordinate substrate. The active-site Proton acceptor is K347. Substrate-binding positions include 374-377 and K398; that span reads SHRS.

It belongs to the enolase family. As to quaternary structure, homodimer. Requires Mg(2+) as cofactor.

It is found in the cytoplasm. The enzyme catalyses (2R)-2-phosphoglycerate = phosphoenolpyruvate + H2O. It participates in carbohydrate degradation; glycolysis; pyruvate from D-glyceraldehyde 3-phosphate: step 4/5. This Penicillium citrinum protein is Enolase (enoA).